Consider the following 502-residue polypeptide: Probable zinc metalloprotease MGG_02107 (502 aa).

Positions 1–21 are cleaved as a signal peptide; that stretch reads MRSPPGAVAALASVAAQLATA. H182, D202, and E235 together coordinate Zn(2+). N-linked (GlcNAc...) asparagine glycosylation is present at N250. D262 lines the Zn(2+) pocket. The disordered stretch occupies residues 284–307; that stretch reads QGGSPAGESKERAETRASIGGEND. N-linked (GlcNAc...) asparagine glycans are attached at residues N375, N417, and N427. The 89-residue stretch at 414 to 502 folds into the Fibronectin type-III domain; it reads QVRNVTVDTS…KSPATMPFPG (89 aa).

Belongs to the peptidase M28 family. M28B subfamily. Requires Zn(2+) as cofactor.

It localises to the secreted. This chain is Probable zinc metalloprotease MGG_02107, found in Pyricularia oryzae (strain 70-15 / ATCC MYA-4617 / FGSC 8958) (Rice blast fungus).